Consider the following 304-residue polypeptide: Killer cell immunoglobulin-like receptor 2DS5 (304 aa).

Positions 1–21 are cleaved as a signal peptide; it reads MSLMVISMACVAFFLLQGAWP. Over 22–245 the chain is Extracellular; the sequence is HEGFRRKPSL…SETGNPRHLH (224 aa). 2 consecutive Ig-like C2-type domains span residues 42-107 and 142-205; these read EETV…VTHS and GESV…FRDS. 2 disulfide bridges follow: cysteine 49–cysteine 100 and cysteine 149–cysteine 198. N-linked (GlcNAc...) asparagine glycans are attached at residues asparagine 67, asparagine 84, asparagine 178, and asparagine 223. The helical transmembrane segment at 246-264 threads the bilayer; that stretch reads VLIGTSVVKLPFTILLFFL. The Cytoplasmic portion of the chain corresponds to 265-304; the sequence is LHRWCSNKKNASVMDQGPAGNRTVNREDSDEQDHQEVSYA. Residues 275-304 form a disordered region; it reads ASVMDQGPAGNRTVNREDSDEQDHQEVSYA. The span at 288 to 304 shows a compositional bias: basic and acidic residues; the sequence is VNREDSDEQDHQEVSYA.

The protein belongs to the immunoglobulin superfamily. In terms of assembly, interacts with TYROBP. N-glycosylated, glycosylation varies depending on the allele which alters cell surface expression levels. Expressed on a discrete subset of peripheral blood NK cells.

It is found in the cell membrane. In terms of biological role, activating natural killer (NK) receptor that recognizes C2 epitopes of HLA-C alleles. Bridging the innate and adaptive immune systems, NK cells express a number of cell surface receptors which either inhibit or stimulate their cytotoxicity. Able to activate NK cells citotoxicity and cytokine production such as IFNG. Receptor functions are attenuated even lost in some alleles, such as KIR2DS5*002 represented in this entry. The sequence is that of Killer cell immunoglobulin-like receptor 2DS5 from Homo sapiens (Human).